A 550-amino-acid chain; its full sequence is Methyl-accepting chemotaxis protein PcaY (550 aa).

Residues 1 to 19 (MVPTRSTARMLANLKIRTG) lie on the Cytoplasmic side of the membrane. Residues 20–40 (MFWVLSLFSLTLLFSTASAWW) form a helical membrane-spanning segment. Residues 41 to 198 (AALGSDQQIT…ESDRRLARAQ (158 aa)) lie on the Periplasmic side of the membrane. A ligand-binding domain region spans residues 44–196 (GSDQQITELD…MLESDRRLAR (153 aa)). Benzoate-binding residues include R71 and N75. R71, N75, and Y135 together coordinate salicylate. A 3,4-dihydroxybenzoate-binding site is contributed by 71–78 (RSSANVSS). L-quinate contacts are provided by residues 71-78 (RSSANVSS), Y135, Q142, and N158. Q169 lines the 3,4-dihydroxybenzoate pocket. Residues 199–219 (LLSLCLLGVTVVLAVLCWAFI) traverse the membrane as a helical segment. Topologically, residues 220-550 (AQRVLHPLRE…MTALVGRFKV (331 aa)) are cytoplasmic. An HAMP domain is found at 221 to 273 (QRVLHPLREAGGHFRRIASGDLSVPVQGQGNNEIGQLFHELQRMQQSQRDTLG). Positions 278–514 (CARQLDAAAT…EVDRNLLNIR (237 aa)) constitute a Methyl-accepting transducer domain.

The protein belongs to the methyl-accepting chemotaxis (MCP) protein family. As to quaternary structure, ligand free PcaY_PP-ligand-binding domain (LBD) is present in a monomer-dimer equilibrium. Only the dimeric LBD is able to bind ligands which in turn causes dimer stabilization.

It is found in the cell inner membrane. In terms of biological role, chemotactic-signal transducers respond to changes in the concentration of attractants and repellents in the environment, transduce a signal from the outside to the inside of the cell, and facilitate sensory adaptation through the variation of the level of methylation. PcaY recognizes a wide range of compounds containing a C6-membered ring with a carboxylate group. Binds preferentially compounds that serve as carbon sources and among them those that rapidly promote growth. Tightest binding compounds are quinate, shikimate, 3-dehydroshikimate and protocatechuate, which are at the interception of the biosynthetic shikimate and catabolic quinate pathways. The sequence is that of Methyl-accepting chemotaxis protein PcaY from Pseudomonas putida (strain ATCC 47054 / DSM 6125 / CFBP 8728 / NCIMB 11950 / KT2440).